Consider the following 942-residue polypeptide: Valine--tRNA ligase (942 aa).

The 'HIGH' region motif lies at 43–53; that stretch reads PNVTGTLHMGH. The short motif at 551–555 is the 'KMSKS' region element; the sequence is KMSKS. Lys554 provides a ligand contact to ATP. Positions 876–942 form a coiled coil; it reads EGLVDLDAER…AGLREQRAKL (67 aa).

This sequence belongs to the class-I aminoacyl-tRNA synthetase family. ValS type 1 subfamily. As to quaternary structure, monomer.

It localises to the cytoplasm. It catalyses the reaction tRNA(Val) + L-valine + ATP = L-valyl-tRNA(Val) + AMP + diphosphate. Its function is as follows. Catalyzes the attachment of valine to tRNA(Val). As ValRS can inadvertently accommodate and process structurally similar amino acids such as threonine, to avoid such errors, it has a 'posttransfer' editing activity that hydrolyzes mischarged Thr-tRNA(Val) in a tRNA-dependent manner. The chain is Valine--tRNA ligase from Stenotrophomonas maltophilia (strain K279a).